The following is a 169-amino-acid chain: MTDTSFKYFMLKKLAWYWSFVELIKGFVITLKYMFKPKVTLRYPMEKGPLSPRFRGEHALRRYPNGEERCIACKLCEVICPAQAIVIEAEEREDGSRRTTRYDIDMIKCIYCGLCQEACPVDAIVEGPNFEFATETREELMYNKEKLLRNGEVWEDAIALRLKKNRPYY.

4Fe-4S ferredoxin-type domains lie at 60-90 (LRRY…IEAE) and 100-129 (TRYD…EGPN). Cys70, Cys73, Cys76, Cys80, Cys109, Cys112, Cys115, and Cys119 together coordinate [4Fe-4S] cluster.

It belongs to the complex I 23 kDa subunit family. In terms of assembly, NDH-1 is composed of 14 different subunits. Subunits NuoA, H, J, K, L, M, N constitute the membrane sector of the complex. [4Fe-4S] cluster serves as cofactor.

It localises to the cell membrane. It catalyses the reaction a quinone + NADH + 5 H(+)(in) = a quinol + NAD(+) + 4 H(+)(out). NDH-1 shuttles electrons from NADH, via FMN and iron-sulfur (Fe-S) centers, to quinones in the respiratory chain. The immediate electron acceptor for the enzyme in this species is believed to be ubiquinone. Couples the redox reaction to proton translocation (for every two electrons transferred, four hydrogen ions are translocated across the cytoplasmic membrane), and thus conserves the redox energy in a proton gradient. In Wolbachia pipientis wMel, this protein is NADH-quinone oxidoreductase subunit I.